Reading from the N-terminus, the 545-residue chain is Chaperonin GroEL (545 aa).

Residues 29–32 (TMGP), Lys-50, 86–90 (DGTTT), Gly-414, 477–479 (DAA), and Asp-493 each bind ATP.

The protein belongs to the chaperonin (HSP60) family. As to quaternary structure, forms a cylinder of 14 subunits composed of two heptameric rings stacked back-to-back. Interacts with the co-chaperonin GroES.

The protein resides in the cytoplasm. The catalysed reaction is ATP + H2O + a folded polypeptide = ADP + phosphate + an unfolded polypeptide.. Together with its co-chaperonin GroES, plays an essential role in assisting protein folding. The GroEL-GroES system forms a nano-cage that allows encapsulation of the non-native substrate proteins and provides a physical environment optimized to promote and accelerate protein folding. The sequence is that of Chaperonin GroEL from Campylobacter lari (strain RM2100 / D67 / ATCC BAA-1060).